Reading from the N-terminus, the 106-residue chain is UPF0145 protein NE1032 (106 aa).

It belongs to the UPF0145 family.

This chain is UPF0145 protein NE1032, found in Nitrosomonas europaea (strain ATCC 19718 / CIP 103999 / KCTC 2705 / NBRC 14298).